Here is a 352-residue protein sequence, read N- to C-terminus: Chorismate synthase (352 aa).

Arginine 48 provides a ligand contact to NADP(+). Residues 125 to 127 (RSS), 237 to 238 (NA), glycine 278, 293 to 297 (KPTSS), and arginine 319 contribute to the FMN site.

This sequence belongs to the chorismate synthase family. As to quaternary structure, homotetramer. It depends on FMNH2 as a cofactor.

The catalysed reaction is 5-O-(1-carboxyvinyl)-3-phosphoshikimate = chorismate + phosphate. The protein operates within metabolic intermediate biosynthesis; chorismate biosynthesis; chorismate from D-erythrose 4-phosphate and phosphoenolpyruvate: step 7/7. Functionally, catalyzes the anti-1,4-elimination of the C-3 phosphate and the C-6 proR hydrogen from 5-enolpyruvylshikimate-3-phosphate (EPSP) to yield chorismate, which is the branch point compound that serves as the starting substrate for the three terminal pathways of aromatic amino acid biosynthesis. This reaction introduces a second double bond into the aromatic ring system. The protein is Chorismate synthase of Francisella tularensis subsp. tularensis (strain FSC 198).